The chain runs to 413 residues: Cardiolipin synthase B (413 aa).

PLD phosphodiesterase domains follow at residues 108-135 (IFRR…SAEH) and 285-312 (RRRP…DPLS). Residues His-113, Lys-115, Asp-120, His-290, Lys-292, and Asp-297 contribute to the active site. Residues 388–413 (AQVPPPAQPEMETQDRVDPENTGVKP) form a disordered region.

It belongs to the phospholipase D family. Cardiolipin synthase subfamily. ClsB sub-subfamily.

The protein resides in the cell membrane. The enzyme catalyses 2 a 1,2-diacyl-sn-glycero-3-phospho-(1'-sn-glycerol) = a cardiolipin + glycerol. In terms of biological role, catalyzes the phosphatidyl group transfer from one phosphatidylglycerol molecule to another to form cardiolipin (CL) (diphosphatidylglycerol) and glycerol. The sequence is that of Cardiolipin synthase B from Salmonella typhimurium (strain LT2 / SGSC1412 / ATCC 700720).